The chain runs to 250 residues: Protein KPLCE (250 aa).

In terms of tissue distribution, skin-specific.

In Homo sapiens (Human), this protein is Protein KPLCE.